The sequence spans 362 residues: Acetylajmalan esterase 2 (362 aa).

A signal peptide spans 1 to 23 (MGFAARPFHIVFSLFVLAGATQA). The active-site Nucleophile is serine 38. Residues asparagine 100, asparagine 118, asparagine 151, and asparagine 202 are each glycosylated (N-linked (GlcNAc...) asparagine). Catalysis depends on residues aspartate 335 and histidine 338.

It belongs to the 'GDSL' lipolytic enzyme family. As to expression, confined to roots.

It catalyses the reaction 17-O-acetylnorajmaline + H2O = norajmaline + acetate + H(+). The enzyme catalyses 17-O-acetylajmaline + H2O = ajmaline + acetate + H(+). It participates in alkaloid biosynthesis; ajmaline biosynthesis. Functionally, acetylesterase involved in the biosynthesis of ajmaline-type monoterpenoid indole alkaloids (MIAs) natural products, important plant-derived pharmaceuticals used in the therapy of heart disorders. Deacetylates 17-O-acetylnorajmaline to produce norajmaline. May also catalyze the conversion of 17-O-acetylajmaline to ajmaline. The sequence is that of Acetylajmalan esterase 2 from Rauvolfia serpentina (Serpentine wood).